Reading from the N-terminus, the 276-residue chain is Elongation factor Ts (276 aa).

The involved in Mg(2+) ion dislocation from EF-Tu stretch occupies residues 80–83; the sequence is TDFV.

The protein belongs to the EF-Ts family.

It is found in the cytoplasm. In terms of biological role, associates with the EF-Tu.GDP complex and induces the exchange of GDP to GTP. It remains bound to the aminoacyl-tRNA.EF-Tu.GTP complex up to the GTP hydrolysis stage on the ribosome. In Kocuria rhizophila (strain ATCC 9341 / DSM 348 / NBRC 103217 / DC2201), this protein is Elongation factor Ts.